Here is a 397-residue protein sequence, read N- to C-terminus: Aspartate/prephenate aminotransferase (397 aa).

Gly38, Trp124, and Asn174 together coordinate L-aspartate. At Lys238 the chain carries N6-(pyridoxal phosphate)lysine. An L-aspartate-binding site is contributed by Arg375.

This sequence belongs to the class-I pyridoxal-phosphate-dependent aminotransferase family. As to quaternary structure, homodimer. Pyridoxal 5'-phosphate serves as cofactor.

The protein resides in the cytoplasm. The catalysed reaction is L-aspartate + 2-oxoglutarate = oxaloacetate + L-glutamate. It catalyses the reaction L-arogenate + 2-oxoglutarate = prephenate + L-glutamate. Its function is as follows. Catalyzes the reversible conversion of aspartate and 2-oxoglutarate to glutamate and oxaloacetate. Can also transaminate prephenate in the presence of glutamate, with lower efficiency. In Nitrosomonas europaea (strain ATCC 19718 / CIP 103999 / KCTC 2705 / NBRC 14298), this protein is Aspartate/prephenate aminotransferase.